The chain runs to 467 residues: UDP-N-acetylmuramoylalanine--D-glutamate ligase (467 aa).

Residue 115–121 (GTDGKTT) participates in ATP binding.

It belongs to the MurCDEF family.

The protein localises to the cytoplasm. It carries out the reaction UDP-N-acetyl-alpha-D-muramoyl-L-alanine + D-glutamate + ATP = UDP-N-acetyl-alpha-D-muramoyl-L-alanyl-D-glutamate + ADP + phosphate + H(+). It functions in the pathway cell wall biogenesis; peptidoglycan biosynthesis. In terms of biological role, cell wall formation. Catalyzes the addition of glutamate to the nucleotide precursor UDP-N-acetylmuramoyl-L-alanine (UMA). The protein is UDP-N-acetylmuramoylalanine--D-glutamate ligase of Chlorobaculum parvum (strain DSM 263 / NCIMB 8327) (Chlorobium vibrioforme subsp. thiosulfatophilum).